Here is a 684-residue protein sequence, read N- to C-terminus: DNA helicase IV (684 aa).

Residues 195–505 enclose the UvrD-like helicase ATP-binding domain; that stretch reads SPLNPAQARA…CDLDTTYRFN (311 aa). ATP contacts are provided by residues 216-223 and Arg-503; that span reads AGAGSGKT.

Belongs to the helicase family. UvrD subfamily.

The catalysed reaction is Couples ATP hydrolysis with the unwinding of duplex DNA by translocating in the 3'-5' direction.. The enzyme catalyses ATP + H2O = ADP + phosphate + H(+). In terms of biological role, helicase IV catalyzes the unwinding of duplex DNA in the 3' to 5' direction with respect to the bound single strand in a reaction that is dependent upon the hydrolysis of ATP. This chain is DNA helicase IV (helD), found in Escherichia coli (strain K12).